A 145-amino-acid polypeptide reads, in one-letter code: Ribosomal RNA large subunit methyltransferase H (145 aa).

S-adenosyl-L-methionine is bound by residues L64, G93, and 112–117 (LSPLTF).

This sequence belongs to the RNA methyltransferase RlmH family. Homodimer.

It localises to the cytoplasm. It carries out the reaction pseudouridine(1915) in 23S rRNA + S-adenosyl-L-methionine = N(3)-methylpseudouridine(1915) in 23S rRNA + S-adenosyl-L-homocysteine + H(+). Its function is as follows. Specifically methylates the pseudouridine at position 1915 (m3Psi1915) in 23S rRNA. The chain is Ribosomal RNA large subunit methyltransferase H from Prochlorococcus marinus (strain MIT 9211).